The following is a 193-amino-acid chain: Dirigent protein 11 (193 aa).

The signal sequence occupies residues 1 to 33 (MLQITNMATPFLLLLLPLIFSTVLLLTITVTQS). N-linked (GlcNAc...) asparagine glycans are attached at residues Asn78 and Asn136.

It belongs to the plant dirigent protein family. Homodimer.

Its subcellular location is the secreted. It localises to the extracellular space. It is found in the apoplast. In terms of biological role, dirigent proteins impart stereoselectivity on the phenoxy radical-coupling reaction, yielding optically active lignans from two molecules of coniferyl alcohol in the biosynthesis of lignans, flavonolignans, and alkaloids and thus plays a central role in plant secondary metabolism. This is Dirigent protein 11 (DIR11) from Arabidopsis thaliana (Mouse-ear cress).